Consider the following 812-residue polypeptide: Valine--tRNA ligase (812 aa).

The 'HIGH' region motif lies at 46-56 (PTVSGQLHIGH). A 'KMSKS' region motif is present at residues 536–540 (KMSKS). Lys539 serves as a coordination point for ATP.

The protein belongs to the class-I aminoacyl-tRNA synthetase family. ValS type 2 subfamily. Monomer.

The protein resides in the cytoplasm. The catalysed reaction is tRNA(Val) + L-valine + ATP = L-valyl-tRNA(Val) + AMP + diphosphate. Catalyzes the attachment of valine to tRNA(Val). As ValRS can inadvertently accommodate and process structurally similar amino acids such as threonine, to avoid such errors, it has a 'posttransfer' editing activity that hydrolyzes mischarged Thr-tRNA(Val) in a tRNA-dependent manner. The protein is Valine--tRNA ligase of Rickettsia bellii (strain OSU 85-389).